A 502-amino-acid polypeptide reads, in one-letter code: MQIKAEEISQIIEQQIQHYESRVEMSETGTVLSVGDQIARVYGVQNAMAMELLEFPGGVMGLVLNLEEDNVGVALLGEDTHIKEGDPVKRTGKIFSVPVGDAVTGRVIDPLGNPIDGLGPVEAKETRNVEIKAPGIIARKSVHEPMYTGLKAVDAMTPIGRGQRELIIGDRQTGKTAVCIDAILAQKGQGVFCFYVAIGQKKSTVALVAETLRRHGAMEYTTIISATASEPASLQFMSAYSGCTMAEYHRDNGRAALIIYDDLSKQAVSYRQMSLLLRRPPGREAYPGDVFYLHSRLLERAAKLSDALGAGSLTALPIIETQAGDVSAYIPTNVISITDGQVYLEPNLFNAGIRPAINVGLSVSRVGGAAQVKAMKQVAGTLRLDLAQYRELAAFAQFGSDLDKATQLKLSRGMRMVELLKQPQYKPMNVAEQVISLFAGTRGFMDDVPVEAVRKFEEGLQEYFHNAKSDILNEIQEKKALDEGLIAKLGAAIDEFKKGFKA.

Residue Gly169 to Thr176 participates in ATP binding.

Belongs to the ATPase alpha/beta chains family. F-type ATPases have 2 components, CF(1) - the catalytic core - and CF(0) - the membrane proton channel. CF(1) has five subunits: alpha(3), beta(3), gamma(1), delta(1), epsilon(1). CF(0) has three main subunits: a(1), b(2) and c(9-12). The alpha and beta chains form an alternating ring which encloses part of the gamma chain. CF(1) is attached to CF(0) by a central stalk formed by the gamma and epsilon chains, while a peripheral stalk is formed by the delta and b chains.

It localises to the cell inner membrane. The catalysed reaction is ATP + H2O + 4 H(+)(in) = ADP + phosphate + 5 H(+)(out). Produces ATP from ADP in the presence of a proton gradient across the membrane. The alpha chain is a regulatory subunit. In Solidesulfovibrio magneticus (strain ATCC 700980 / DSM 13731 / RS-1) (Desulfovibrio magneticus), this protein is ATP synthase subunit alpha.